Reading from the N-terminus, the 211-residue chain is MANTDRPALPHKRAVPPSRADSGPRRRRTKLLDAVAGFGVTLGSMFKKTVTEEYPERPGPVAARYHGRHQLNRYPDGLEKCIGCELCAWACPADAIYVEGADNTEEERFSPGERYGRVYQINYLRCIGCGLCIEACPTRALTMTYDYELADDNRADLIYEKDRLLAPLLPEMAAPPHPRTPGATDKDYYLGNVTAEGLRGVRESQTTGDSR.

Positions 1 to 27 (MANTDRPALPHKRAVPPSRADSGPRRR) are disordered. 4Fe-4S ferredoxin-type domains lie at 71–101 (LNRY…VEGA) and 117–146 (RVYQ…MTYD). [4Fe-4S] cluster is bound by residues C81, C84, C87, C91, C126, C129, C132, and C136.

This sequence belongs to the complex I 23 kDa subunit family. As to quaternary structure, NDH-1 is composed of 14 different subunits. Subunits NuoA, H, J, K, L, M, N constitute the membrane sector of the complex. Requires [4Fe-4S] cluster as cofactor.

The protein localises to the cell membrane. It carries out the reaction a quinone + NADH + 5 H(+)(in) = a quinol + NAD(+) + 4 H(+)(out). NDH-1 shuttles electrons from NADH, via FMN and iron-sulfur (Fe-S) centers, to quinones in the respiratory chain. The immediate electron acceptor for the enzyme in this species is believed to be menaquinone. Couples the redox reaction to proton translocation (for every two electrons transferred, four hydrogen ions are translocated across the cytoplasmic membrane), and thus conserves the redox energy in a proton gradient. This chain is NADH-quinone oxidoreductase subunit I, found in Mycobacterium tuberculosis (strain ATCC 25177 / H37Ra).